Here is a 176-residue protein sequence, read N- to C-terminus: Ribosome rescue factor SmrB (176 aa).

A Smr domain is found at 97–172 (LDMHGMTQQE…GNGALLVLID (76 aa)).

The protein belongs to the SmrB family. In terms of assembly, associates with collided ribosomes, but not with correctly translating polysomes.

Acts as a ribosome collision sensor. Detects stalled/collided disomes (pairs of ribosomes where the leading ribosome is stalled and a second ribosome has collided with it) and endonucleolytically cleaves mRNA at the 5' boundary of the stalled ribosome. Stalled/collided disomes form a new interface (primarily via the 30S subunits) that binds SmrB. Cleaved mRNA becomes available for tmRNA ligation, leading to ribosomal subunit dissociation and rescue of stalled ribosomes. The chain is Ribosome rescue factor SmrB from Photobacterium profundum (strain SS9).